The sequence spans 1040 residues: MQVLPPGSTGGPSRLFILRPVATTLLMAAILLAGIIGYRFLPVAALPEVDYPTIQVVTLYPGASPDVMTSAVTAPLERQFGQMSGLKQMSSQSSGGASVVTLQFQLTLPLDVAEQEVQAAINAATNLLPSDLPNPPIYSKVNPADPPIMTLAVTSNAMPMTQVEDMVETRVAQKISQVSGVGLVTLAGGQRPAVRVKLNAQAVAALGLTSETVRTAITGANVNSAKGSLDGPERAVTLSANDQMQSADDYRRLIIAYQNGAPVRLGDVATVEQGAENSWLGAWANQAPANVMNVQRQPGANIIATADSIRQMLPQLTESLPKSVKVTVLSDRTTNIRASVRDTQFELMLAIALVVMIIYLFLRNIPATIIPGVAVPLSLIGTFAVMVFLDFSINNLTLMALTIATGFVVDDAIVVIENISRYIEKGEKPLAAALKGAGEIGFTIISLTFSLIAVLIPLLFMGDIVGRLFREFAVTLAVAILISAVVSLTLTPMMCARMLSQQSLRKQNRFSRACERMFDRVIASYGRGLAKVLNHPWLTLSVAFATLLLSVMLWIVIPKGFFPVQDNGIIQGTLQAPQSSSYASMAQRQRQVAERILQDPAVQSLTTFVGVDGANPTLNSARLQINLKPLDARDDRVQQVISRLQTAVATIPGVALYLQPTQDLTIDTQVSRTQYQFTLQATTLDALSHWVPKLQNALQSLPQLSEVSSDWQDRGLAAWVNVDRDSASRLGISMADVDNALYNAFGQRLISTIYTQANQYRVVLEHNTASTPGLAALETIRLTSRDGGTVPLSAIARIEQRFAPLSINHLDQFPVTTFSFNVPEGYSLGDAVQAILDTEKTLALPADITTQFQGSTLAFQAALGSTVWLIVAAVVAMYIVLGVLYESFIHPITILSTLPTAGVGALLALIIAGSELDIIAIIGIILLIGIVKKNAIMMIDFALAAEREQGMSPRDAIFQACLLRFRPILMTTLAALLGALPLMLSTGVGAELRRPLGIAMVGGLLVSQVLTLFTTPVIYLLFDRLSLYVKSRFPRHKEEA.

A run of 12 helical transmembrane segments spans residues 25 to 45 (LLMA…PVAA), 347 to 367 (LMLA…NIPA), 369 to 389 (IIPG…MVFL), 396 to 416 (LTLM…IVVI), 440 to 460 (IGFT…PLLF), 472 to 492 (FAVT…TLTP), 537 to 557 (WLTL…WIVI), 863 to 883 (LGST…VLGV), 888 to 908 (FIHP…ALLA), 910 to 930 (IIAG…LIGI), 968 to 988 (ILMT…STGV), and 998 to 1018 (IAMV…TPVI).

The protein belongs to the resistance-nodulation-cell division (RND) (TC 2.A.6) family. MdtB subfamily. As to quaternary structure, part of a tripartite efflux system composed of MdtA, MdtB and MdtC. MdtB forms a heteromultimer with MdtC.

It localises to the cell inner membrane. The chain is Multidrug resistance protein MdtB from Salmonella schwarzengrund (strain CVM19633).